Here is a 359-residue protein sequence, read N- to C-terminus: N-acetylhexosamine 1-kinase (359 aa).

The Protein kinase domain maps to 21 to 359 (VTGIEPYGDG…IVADIMEAAR (339 aa)).

The protein belongs to the protein kinase superfamily. The cofactor is Mg(2+).

The catalysed reaction is N-acetyl-D-hexosamine + ATP = N-acetyl-alpha-D-hexosamine 1-phosphate + ADP + H(+). In terms of biological role, phosphorylates both N-acetylglucosamine (GlcNAc) and N-acetylgalactosamine (GalNAc) at similar rates. Involved in the lacto-N-biose I/galacto-N-biose (LNB/GNB) degradation pathway, which is important for host intestinal colonization by bifidobacteria. Also accepts GTP and ITP as phosphate donors. In vitro, can phosphorylate several GlcNAc and GalNAc derivatives. This Bifidobacterium longum subsp. longum (strain ATCC 15707 / DSM 20219 / JCM 1217 / NCTC 11818 / E194b) protein is N-acetylhexosamine 1-kinase (nahK).